A 29-amino-acid chain; its full sequence is Glucagon (29 aa).

The protein belongs to the glucagon family.

The protein localises to the secreted. In terms of biological role, promotes hydrolysis of glycogen and lipids, and raises the blood sugar level. This Thunnus obesus (Bigeye tuna) protein is Glucagon (gcg).